The sequence spans 448 residues: Methylenetetrahydrofolate--tRNA-(uracil-5-)-methyltransferase TrmFO (448 aa).

Gly13 to Gly18 provides a ligand contact to FAD.

Belongs to the MnmG family. TrmFO subfamily. FAD serves as cofactor.

Its subcellular location is the cytoplasm. The catalysed reaction is uridine(54) in tRNA + (6R)-5,10-methylene-5,6,7,8-tetrahydrofolate + NADH + H(+) = 5-methyluridine(54) in tRNA + (6S)-5,6,7,8-tetrahydrofolate + NAD(+). It carries out the reaction uridine(54) in tRNA + (6R)-5,10-methylene-5,6,7,8-tetrahydrofolate + NADPH + H(+) = 5-methyluridine(54) in tRNA + (6S)-5,6,7,8-tetrahydrofolate + NADP(+). Functionally, catalyzes the folate-dependent formation of 5-methyl-uridine at position 54 (M-5-U54) in all tRNAs. This Streptococcus pyogenes serotype M1 protein is Methylenetetrahydrofolate--tRNA-(uracil-5-)-methyltransferase TrmFO.